A 342-amino-acid polypeptide reads, in one-letter code: Phosphate acyltransferase (342 aa).

The protein belongs to the PlsX family. In terms of assembly, homodimer. Probably interacts with PlsY.

It localises to the cytoplasm. The enzyme catalyses a fatty acyl-[ACP] + phosphate = an acyl phosphate + holo-[ACP]. It functions in the pathway lipid metabolism; phospholipid metabolism. In terms of biological role, catalyzes the reversible formation of acyl-phosphate (acyl-PO(4)) from acyl-[acyl-carrier-protein] (acyl-ACP). This enzyme utilizes acyl-ACP as fatty acyl donor, but not acyl-CoA. In Alkalilimnicola ehrlichii (strain ATCC BAA-1101 / DSM 17681 / MLHE-1), this protein is Phosphate acyltransferase.